The sequence spans 370 residues: Small ribosomal subunit biogenesis GTPase RsgA (370 aa).

One can recognise a CP-type G domain in the interval 97–255; sequence QTQLDRPPIA…LADTPGFNQP (159 aa). GTP-binding positions include 146 to 149 and 197 to 205; these read NKSD and GPSGVGKSS. Cysteine 280, cysteine 285, histidine 287, and cysteine 293 together coordinate Zn(2+). Positions 328-370 are disordered; sequence TLKLKTKGKGQSQYEPKLESKKYRRTSRRTQVQGLQDLYQEEE.

Belongs to the TRAFAC class YlqF/YawG GTPase family. RsgA subfamily. In terms of assembly, monomer. Associates with 30S ribosomal subunit, binds 16S rRNA. Zn(2+) serves as cofactor.

It is found in the cytoplasm. Functionally, one of several proteins that assist in the late maturation steps of the functional core of the 30S ribosomal subunit. Helps release RbfA from mature subunits. May play a role in the assembly of ribosomal proteins into the subunit. Circularly permuted GTPase that catalyzes slow GTP hydrolysis, GTPase activity is stimulated by the 30S ribosomal subunit. This chain is Small ribosomal subunit biogenesis GTPase RsgA, found in Trichormus variabilis (strain ATCC 29413 / PCC 7937) (Anabaena variabilis).